Reading from the N-terminus, the 409-residue chain is uncharacterized protein (409 aa).

The region spanning 1-209 (MRVFVARQPI…GHDLSTHFYS (209 aa)) is the EAL domain. The HDOD domain occupies 203–392 (LSTHFYSYYE…GNQLDKEEAY (190 aa)).

This is an uncharacterized protein from Bacillus subtilis (strain 168).